A 205-amino-acid chain; its full sequence is Venom allergen 5 (205 aa).

Cystine bridges form between cysteine 4–cysteine 16, cysteine 8–cysteine 104, cysteine 28–cysteine 96, and cysteine 171–cysteine 188. The SCP domain maps to 47–190; it reads VNEHNRFRQK…MQHHYLICNY (144 aa).

This sequence belongs to the CRISP family. Venom allergen 5-like subfamily. In terms of tissue distribution, expressed by the venom gland.

Its subcellular location is the secreted. This is Venom allergen 5 from Polistes fuscatus (Paper wasp).